We begin with the raw amino-acid sequence, 528 residues long: Na(+)/H(+) antiporter NhaB (528 aa).

10 helical membrane passes run 25–47 (IISF…GWLL), 66–86 (PGGL…SQVL), 97–117 (LLLV…LFVF), 130–164 (VSLL…FYSI), 241–261 (IRMS…CFLV), 304–324 (AFIG…VGLI), 351–371 (ALPF…IIDL), 390–410 (LVVF…VFVG), 448–468 (ATPN…APLI), and 476–496 (VWMA…AIQL).

It belongs to the NhaB Na(+)/H(+) (TC 2.A.34) antiporter family.

The protein resides in the cell inner membrane. The catalysed reaction is 2 Na(+)(in) + 3 H(+)(out) = 2 Na(+)(out) + 3 H(+)(in). Functionally, na(+)/H(+) antiporter that extrudes sodium in exchange for external protons. This Shewanella halifaxensis (strain HAW-EB4) protein is Na(+)/H(+) antiporter NhaB.